The sequence spans 448 residues: Adenylosuccinate synthetase (448 aa).

Residues 22-28 (GDEGKGK) and 50-52 (GHT) contribute to the GTP site. The active-site Proton acceptor is the D23. The Mg(2+) site is built by D23 and G50. IMP-binding positions include 23–26 (DEGK), 48–51 (NAGH), T139, R153, Q234, T249, and R321. H51 (proton donor) is an active-site residue. 317 to 323 (SVTGRPR) provides a ligand contact to substrate. Residues R323, 349 to 351 (KLD), and 431 to 433 (STG) each bind GTP.

Belongs to the adenylosuccinate synthetase family. Homodimer. Mg(2+) serves as cofactor.

The protein resides in the cytoplasm. The catalysed reaction is IMP + L-aspartate + GTP = N(6)-(1,2-dicarboxyethyl)-AMP + GDP + phosphate + 2 H(+). It participates in purine metabolism; AMP biosynthesis via de novo pathway; AMP from IMP: step 1/2. In terms of biological role, plays an important role in the de novo pathway of purine nucleotide biosynthesis. Catalyzes the first committed step in the biosynthesis of AMP from IMP. The chain is Adenylosuccinate synthetase from Burkholderia thailandensis (strain ATCC 700388 / DSM 13276 / CCUG 48851 / CIP 106301 / E264).